Reading from the N-terminus, the 185-residue chain is Ribosome-recycling factor (185 aa).

It belongs to the RRF family.

The protein localises to the cytoplasm. Functionally, responsible for the release of ribosomes from messenger RNA at the termination of protein biosynthesis. May increase the efficiency of translation by recycling ribosomes from one round of translation to another. The protein is Ribosome-recycling factor of Corynebacterium jeikeium (strain K411).